The primary structure comprises 212 residues: uncharacterized protein (212 aa).

The N-terminal stretch at 1–20 (MRRVLLCFLTLILLLPAASA) is a signal peptide.

This is an uncharacterized protein from Archaeoglobus fulgidus (strain ATCC 49558 / DSM 4304 / JCM 9628 / NBRC 100126 / VC-16).